The primary structure comprises 870 residues: Patatin-like phospholipase domain-containing protein NCU11180 (870 aa).

2 disordered regions span residues 1-24 and 131-158; these read MADD…PPEA and KVIK…KGVA. Positions 131–141 are enriched in basic and acidic residues; that stretch reads KVIKTDRDEKR. A compositionally biased stretch (basic residues) spans 142–155; it reads NKRGKDRKNKKPRK. The helical transmembrane segment at 183 to 203 threads the bilayer; it reads WPFLLFVSFWIVGLGMAYLAT. The disordered stretch occupies residues 281-320; that stretch reads EEVERELESQSQNSDSGVASGEETSNTKAGGGNNGNDKKT. A compositionally biased stretch (polar residues) spans 289–308; sequence SQSQNSDSGVASGEETSNTK. In terms of domain architecture, PNPLA spans 399 to 590; the sequence is LCLSGGATFA…RTDIPIKSLN (192 aa). The GXSXG signature appears at 430–434; that stretch reads GTSGG. Residue S432 is the Nucleophile of the active site. D577 functions as the Proton acceptor in the catalytic mechanism. Disordered stretches follow at residues 735–786 and 804–870; these read RRET…DRRG and GREG…HSRT. The span at 818 to 834 shows a compositional bias: acidic residues; sequence TEDELTMTELEGEDDDG.

This sequence belongs to the PLPL family.

The protein localises to the membrane. Its function is as follows. Probable lipid hydrolase. This chain is Patatin-like phospholipase domain-containing protein NCU11180, found in Neurospora crassa (strain ATCC 24698 / 74-OR23-1A / CBS 708.71 / DSM 1257 / FGSC 987).